We begin with the raw amino-acid sequence, 309 residues long: Homoserine O-succinyltransferase (309 aa).

C142 serves as the catalytic Acyl-thioester intermediate. 2 residues coordinate substrate: K163 and S192. The active-site Proton acceptor is H235. Residue E237 is part of the active site. Residue R249 coordinates substrate.

Belongs to the MetA family.

The protein localises to the cytoplasm. The enzyme catalyses L-homoserine + succinyl-CoA = O-succinyl-L-homoserine + CoA. Its pathway is amino-acid biosynthesis; L-methionine biosynthesis via de novo pathway; O-succinyl-L-homoserine from L-homoserine: step 1/1. Transfers a succinyl group from succinyl-CoA to L-homoserine, forming succinyl-L-homoserine. This is Homoserine O-succinyltransferase from Yersinia enterocolitica serotype O:8 / biotype 1B (strain NCTC 13174 / 8081).